The primary structure comprises 535 residues: Calcium-dependent protein kinase 1 (535 aa).

Residues 1–34 (MGCNQSKSANDVRGNKVNNVNSKKKNNKREDIND) form a disordered region. The N-myristoyl glycine moiety is linked to residue G2. The S-palmitoyl cysteine moiety is linked to residue C3. The Protein kinase domain occupies 57 to 324 (YFKVRKLGSG…AEEALNSRWI (268 aa)). Residues 63 to 71 (LGSGAYGEV) and K86 each bind ATP. Residue S65 is modified to Phosphoserine. S117 carries the phosphoserine modification. The active-site Proton acceptor is D190. S216 and S219 each carry phosphoserine. Phosphothreonine is present on T230. The residue at position 334 (S334) is a Phosphoserine. The short motif at 345–352 (NMRKFEGS) is the J domain autoinhibitory motif element. The tract at residues 345–363 (NMRKFEGSQKLAQAAILFI) is j domain. The J domain interacts with the EF-hand domains signature appears at 353-363 (QKLAQAAILFI). EF-hand domains lie at 371 to 406 (EERK…LRNF), 415 to 450 (NVEE…KQIL), 451 to 486 (FSEE…GFYF), and 497 to 532 (VSEK…ICDN). Ca(2+)-binding residues include D384, N386, D388, Q390, E395, D428, D430, N432, Y434, E439, D464, D466, S468, K470, E475, D510, N512, D514, M516, and E521.

The protein belongs to the protein kinase superfamily. Ser/Thr protein kinase family. CDPK subfamily. Monomer. Mg(2+) serves as cofactor. In terms of processing, myristoylated. Myristoylation and palmitoylation are required for the localization to the parasitophorous vacuole membrane. Palmitoylated. Palmitoylation increases in merozoites in response to low level of extracellular K(+) in the host blood. Myristoylation and palmitoylation are required for the localization to the parasitophorous vacuole membrane. Post-translationally, phosphorylation at Thr-230 may regulate CDPK1 kinase activity. Phosphorylation increases in response to an increase in intracellular Ca(2+) levels. Autophosphorylated in vitro. Autophosphorylation does not affect membrane localization in vitro.

It localises to the membrane. The protein localises to the cell membrane. The protein resides in the parasitophorous vacuole membrane. Its subcellular location is the cytoplasm. It is found in the cell projection. It localises to the cilium. The protein localises to the flagellum. The protein resides in the host cell membrane. It carries out the reaction L-seryl-[protein] + ATP = O-phospho-L-seryl-[protein] + ADP + H(+). The catalysed reaction is L-threonyl-[protein] + ATP = O-phospho-L-threonyl-[protein] + ADP + H(+). With respect to regulation, activated by calcium. Upon calcium binding to the EF-hand domains, the C-terminus of the junction domain (J domain) undergoes a conformational change which results in the dissociation of the pseudo-substrate inhibitory motif from the catalytic domain. This, in turn may facilitate the autophosphorylation of the activation loop at Thr-230, which leads to the kinase activation. Functionally, calcium-dependent protein kinase which acts as a sensor and effector of intracellular Ca(2+) levels probably in part downstream of cGMP-activated PKG kinase. During the liver stage, involved in sporozoite motility and thus in sporozoite invasion of host hepatocytes, probably together with CDPK4 and CDPK5. In the mosquito midgut and during the last stage of male gamete exflagellation, may play a role in the rupture of the host erythrocyte membrane. In the mosquito midgut, required for the differentiation of the zygote into the ookinete by promoting the translational activation of a subset of repressed mRNAs; these mRNAs are kept repressed in the zygote by the DOZI- or CITH-containing mRNP complexes. Dispensable during the asexual blood stage. The chain is Calcium-dependent protein kinase 1 from Plasmodium yoelii yoelii.